The sequence spans 333 residues: NADH-ubiquinone oxidoreductase chain 2 (333 aa).

10 helical membrane-spanning segments follow: residues 10–30 (WFIY…NIFI), 57–77 (LIYY…IIVY), 91–111 (FMVQ…FWMI), 121–141 (QIFL…VSMT), 143–163 (INSW…FYAN), 170–190 (KLLA…LELN), 192–212 (NMFI…ISFL), 242–262 (MYPI…MVSV), 267–287 (WILF…IIIL), and 313–333 (SYFA…LNFL).

This sequence belongs to the complex I subunit 2 family.

The protein localises to the mitochondrion inner membrane. It catalyses the reaction a ubiquinone + NADH + 5 H(+)(in) = a ubiquinol + NAD(+) + 4 H(+)(out). Core subunit of the mitochondrial membrane respiratory chain NADH dehydrogenase (Complex I) that is believed to belong to the minimal assembly required for catalysis. Complex I functions in the transfer of electrons from NADH to the respiratory chain. The immediate electron acceptor for the enzyme is believed to be ubiquinone. The sequence is that of NADH-ubiquinone oxidoreductase chain 2 (ND2) from Apis mellifera ligustica (Common honeybee).